Reading from the N-terminus, the 33-residue chain is Thrombin-like enzyme RP34 (33 aa).

Residues 1 to 33 (VIGGDEXDINEHRSLALMYXSWSHRFIXXGXLI) enclose the Peptidase S1 domain.

This sequence belongs to the peptidase S1 family. Snake venom subfamily. Homodimer. Expressed by the venom gland.

It is found in the secreted. The enzyme catalyses Selective cleavage of Arg-|-Xaa bond in fibrinogen, to form fibrin, and release fibrinopeptide A. The specificity of further degradation of fibrinogen varies with species origin of the enzyme.. Functionally, thrombin-like snake venom serine protease that displays clotting activity on fibrinogen. Shows both arginine-ester hydrolase and amidase activities on synthetic substrates. Also shows proteolytic activity toward casein. The sequence is that of Thrombin-like enzyme RP34 from Cerastes cerastes (Horned desert viper).